A 248-amino-acid polypeptide reads, in one-letter code: 5'-nucleotidase SurE (248 aa).

Positions 8, 9, 39, and 91 each coordinate a divalent metal cation.

Belongs to the SurE nucleotidase family. A divalent metal cation serves as cofactor.

The protein localises to the cytoplasm. It carries out the reaction a ribonucleoside 5'-phosphate + H2O = a ribonucleoside + phosphate. Its function is as follows. Nucleotidase that shows phosphatase activity on nucleoside 5'-monophosphates. In Citrifermentans bemidjiense (strain ATCC BAA-1014 / DSM 16622 / JCM 12645 / Bem) (Geobacter bemidjiensis), this protein is 5'-nucleotidase SurE.